We begin with the raw amino-acid sequence, 335 residues long: Probable BOI-related E3 ubiquitin-protein ligase 3 (335 aa).

The tract at residues 196-232 is WRD domain; sequence LEEKVKSLCVENQIWRDVAQSNEATVNALRSNLQQVL. The RING-type zinc-finger motif lies at 287 to 322; sequence CRSCGKGEASVLLLPCRHMCLCSVCGSSLNTCPICK.

Interacts with the DELLA proteins GAI, RGA, RGL1, RGL2 and RGL3.

It catalyses the reaction S-ubiquitinyl-[E2 ubiquitin-conjugating enzyme]-L-cysteine + [acceptor protein]-L-lysine = [E2 ubiquitin-conjugating enzyme]-L-cysteine + N(6)-ubiquitinyl-[acceptor protein]-L-lysine.. It participates in protein degradation; proteasomal ubiquitin-dependent pathway. Its function is as follows. Probable E3 ubiquitin-protein ligase. Has no effect on the stability of the DELLA proteins. This Arabidopsis thaliana (Mouse-ear cress) protein is Probable BOI-related E3 ubiquitin-protein ligase 3 (BRG3).